The sequence spans 225 residues: 3-dehydroquinate dehydratase (225 aa).

Residues S6, E30 to R32, and R62 contribute to the 3-dehydroquinate site. H118 acts as the Proton donor/acceptor in catalysis. The Schiff-base intermediate with substrate role is filled by K143. 3-dehydroquinate contacts are provided by R186, S205, and Q209.

Belongs to the type-I 3-dehydroquinase family. In terms of assembly, homodimer.

The enzyme catalyses 3-dehydroquinate = 3-dehydroshikimate + H2O. The protein operates within metabolic intermediate biosynthesis; chorismate biosynthesis; chorismate from D-erythrose 4-phosphate and phosphoenolpyruvate: step 3/7. Functionally, involved in the third step of the chorismate pathway, which leads to the biosynthesis of aromatic amino acids. Catalyzes the cis-dehydration of 3-dehydroquinate (DHQ) and introduces the first double bond of the aromatic ring to yield 3-dehydroshikimate. The polypeptide is 3-dehydroquinate dehydratase (Streptococcus pneumoniae (strain Taiwan19F-14)).